The chain runs to 419 residues: Tyrosine--tRNA ligase 2 (419 aa).

Position 34 (Y34) interacts with L-tyrosine. Residues 39–48 carry the 'HIGH' region motif; the sequence is PTGDSMHIGH. Residues Y168 and Q172 each contribute to the L-tyrosine site. Residues 230–234 carry the 'KMSKS' region motif; it reads KFGKS. K233 provides a ligand contact to ATP. Residues 352-418 form the S4 RNA-binding domain; the sequence is KNIVEWLVDL…GKKNYSLVKL (67 aa).

This sequence belongs to the class-I aminoacyl-tRNA synthetase family. TyrS type 1 subfamily. In terms of assembly, homodimer.

Its subcellular location is the cytoplasm. The catalysed reaction is tRNA(Tyr) + L-tyrosine + ATP = L-tyrosyl-tRNA(Tyr) + AMP + diphosphate + H(+). Functionally, catalyzes the attachment of tyrosine to tRNA(Tyr) in a two-step reaction: tyrosine is first activated by ATP to form Tyr-AMP and then transferred to the acceptor end of tRNA(Tyr). The polypeptide is Tyrosine--tRNA ligase 2 (Bacillus thuringiensis subsp. konkukian (strain 97-27)).